The primary structure comprises 189 residues: Large ribosomal subunit protein uL5 (189 aa).

It belongs to the universal ribosomal protein uL5 family. As to quaternary structure, part of the 50S ribosomal subunit; part of the 5S rRNA/L5/L18/L25 subcomplex. Contacts the 5S rRNA and the P site tRNA. Forms a bridge to the 30S subunit in the 70S ribosome.

Its function is as follows. This is one of the proteins that bind and probably mediate the attachment of the 5S RNA into the large ribosomal subunit, where it forms part of the central protuberance. In the 70S ribosome it contacts protein S13 of the 30S subunit (bridge B1b), connecting the 2 subunits; this bridge is implicated in subunit movement. Contacts the P site tRNA; the 5S rRNA and some of its associated proteins might help stabilize positioning of ribosome-bound tRNAs. The polypeptide is Large ribosomal subunit protein uL5 (Corynebacterium jeikeium (strain K411)).